The following is a 386-amino-acid chain: Ribonucleoside-diphosphate reductase subunit M2 (386 aa).

The residue at position 20 (Ser20) is a Phosphoserine. Thr33 is subject to Phosphothreonine. Positions Arg49–Ile51 match the Cy motif. The Fe cation site is built by Asp139, Glu170, and His173. The active site involves Tyr177. Residues Glu233, Glu267, and His270 each coordinate Fe cation.

This sequence belongs to the ribonucleoside diphosphate reductase small chain family. In terms of assembly, heterodimer of a large and a small subunit. Interacts (via Cy motif and when phosphorylated at Thr-33) with CCNF; the interaction occurs exclusively in G2 and early M. Requires Fe cation as cofactor. In terms of processing, phosphorylation on Ser-20 relieves the inhibitory effect on Wnt signaling. Phosphorylated on Thr-33 by CDK1 and CDK2; predominantly in G2 and M phase. Ubiquitinated by the SCF(CCNF) E3 ubiquitin-protein ligase complex; leading to its degradation by the proteasome.

The protein resides in the cytoplasm. Its subcellular location is the nucleus. It catalyses the reaction a 2'-deoxyribonucleoside 5'-diphosphate + [thioredoxin]-disulfide + H2O = a ribonucleoside 5'-diphosphate + [thioredoxin]-dithiol. Its function is as follows. Provides the precursors necessary for DNA synthesis. Catalyzes the biosynthesis of deoxyribonucleotides from the corresponding ribonucleotides. Inhibits Wnt signaling. This Mesocricetus auratus (Golden hamster) protein is Ribonucleoside-diphosphate reductase subunit M2 (RRM2).